Reading from the N-terminus, the 315-residue chain is Homoserine kinase (315 aa).

97–107 serves as a coordination point for ATP; sequence PPARGLGSSAT.

Belongs to the GHMP kinase family. Homoserine kinase subfamily.

It localises to the cytoplasm. It carries out the reaction L-homoserine + ATP = O-phospho-L-homoserine + ADP + H(+). It participates in amino-acid biosynthesis; L-threonine biosynthesis; L-threonine from L-aspartate: step 4/5. In terms of biological role, catalyzes the ATP-dependent phosphorylation of L-homoserine to L-homoserine phosphate. The sequence is that of Homoserine kinase from Prochlorococcus marinus (strain SARG / CCMP1375 / SS120).